The sequence spans 25 residues: Omega conotoxin-CVIF (25 aa).

3 disulfide bridges follow: cysteine 1–cysteine 16, cysteine 8–cysteine 20, and cysteine 15–cysteine 25. Residue cysteine 25 is modified to Cysteine amide.

It belongs to the conotoxin O1 superfamily. Expressed by the venom duct.

Its subcellular location is the secreted. Its function is as follows. Omega-conotoxins act at presynaptic membranes, they bind and block voltage-gated calcium channels. This toxin blocks N-type calcium channels (Cav2.2/CACNA1B). It shows a higher potency when Cav2.2/CACNA1B is only expressed with the ancillary subunit CACNB3 (IC(50)=0.1 nM) than on Cav2.2/CACNA1B expressed with the ancillary subunits CACNA2D1 and CACNB3 (IC(50)=19.9 nM). The Cav2.2/CACNA1B block by this toxin is voltage-independent, whereas the recovery from toxin block is voltage-dependent. There is a low recovery at physiological membrane potential and a high recovery with hyperpolarized potential. This indicates that the toxin has a higher affinity for Cav2.2/CACNA1B in the inactivated state. It is noteworthy that ancillary subunits beta modulate recovery from this toxin block. Cav2.2/CACNA1B expressed with the ancillary subunit CACNB2a (isoform 2a) almost recover completely from this toxin block, whereas an expression with CACNB3 exhibits relatively weak recovery. Inhibition by this toxin of excitatory synaptic transmission is reversible. In vivo, when tested on rat model of persistent pain, this toxin blocks chronic pain behavior. This is Omega conotoxin-CVIF from Conus catus (Cat cone).